Consider the following 180-residue polypeptide: Large ribosomal subunit protein uL6 (180 aa).

Belongs to the universal ribosomal protein uL6 family. As to quaternary structure, part of the 50S ribosomal subunit.

Its function is as follows. This protein binds to the 23S rRNA, and is important in its secondary structure. It is located near the subunit interface in the base of the L7/L12 stalk, and near the tRNA binding site of the peptidyltransferase center. The sequence is that of Large ribosomal subunit protein uL6 from Flavobacterium johnsoniae (strain ATCC 17061 / DSM 2064 / JCM 8514 / BCRC 14874 / CCUG 350202 / NBRC 14942 / NCIMB 11054 / UW101) (Cytophaga johnsonae).